The sequence spans 520 residues: Flavin-dependent halogenase radH (520 aa).

FAD-binding residues include Gly14, Ala17, and Glu47. Chloride-binding residues include Ser330 and Gly331.

This sequence belongs to the flavin-dependent halogenase family.

The protein operates within secondary metabolite biosynthesis. Non-heme halogenase; part of the gene cluster that mediates the biosynthesis of radicicol, a resorcylic acid lactone (RAL) that irreversibly inhibits the HSP90 molecular chaperone, an important target for cancer chemotherapy. The cluster encodes only two apparent post-PKS enzymes, a cytochrome P450 monooxygenase (radP) and a non-heme halogenase (radH) that introduce the epoxide and the chlorine, respectively. If this cluster includes all the genes required for radicicol biosynthesis, the remaining structural features of radicicol are presumably generated by the PKSs rads1 and rads2. The C-2' ketone could arise if the R-PKS rads1 and NR-PKS rads2 each carry out four iterations, in contrast to the five iteration-three iteration split for the hypothemycin PKSs. The origin of the cis 5',6' double bond is not known. The radicicol R-PKS rads1 ER domain may catalyze either double bond isomerization or reduction in the third iteration. The sequence is that of Flavin-dependent halogenase radH from Floropilus chiversii (Chaetomium chiversii).